The following is a 60-amino-acid chain: UPF0434 protein ECA2555 (60 aa).

It belongs to the UPF0434 family.

In Pectobacterium atrosepticum (strain SCRI 1043 / ATCC BAA-672) (Erwinia carotovora subsp. atroseptica), this protein is UPF0434 protein ECA2555.